Reading from the N-terminus, the 325-residue chain is Tetraacyldisaccharide 4'-kinase (325 aa).

58 to 65 is a binding site for ATP; sequence TVGGSGKT.

This sequence belongs to the LpxK family.

It catalyses the reaction a lipid A disaccharide + ATP = a lipid IVA + ADP + H(+). It participates in glycolipid biosynthesis; lipid IV(A) biosynthesis; lipid IV(A) from (3R)-3-hydroxytetradecanoyl-[acyl-carrier-protein] and UDP-N-acetyl-alpha-D-glucosamine: step 6/6. Transfers the gamma-phosphate of ATP to the 4'-position of a tetraacyldisaccharide 1-phosphate intermediate (termed DS-1-P) to form tetraacyldisaccharide 1,4'-bis-phosphate (lipid IVA). The polypeptide is Tetraacyldisaccharide 4'-kinase (Coxiella burnetii (strain CbuK_Q154) (Coxiella burnetii (strain Q154))).